Consider the following 289-residue polypeptide: Elongation factor Ts (289 aa).

An involved in Mg(2+) ion dislocation from EF-Tu region spans residues 82-85 (TDFV).

The protein belongs to the EF-Ts family.

It is found in the cytoplasm. Associates with the EF-Tu.GDP complex and induces the exchange of GDP to GTP. It remains bound to the aminoacyl-tRNA.EF-Tu.GTP complex up to the GTP hydrolysis stage on the ribosome. In Chloroherpeton thalassium (strain ATCC 35110 / GB-78), this protein is Elongation factor Ts.